We begin with the raw amino-acid sequence, 215 residues long: Probable transaldolase (215 aa).

Catalysis depends on Lys83, which acts as the Schiff-base intermediate with substrate.

Belongs to the transaldolase family. Type 3B subfamily.

It is found in the cytoplasm. The catalysed reaction is D-sedoheptulose 7-phosphate + D-glyceraldehyde 3-phosphate = D-erythrose 4-phosphate + beta-D-fructose 6-phosphate. Its pathway is carbohydrate degradation; pentose phosphate pathway; D-glyceraldehyde 3-phosphate and beta-D-fructose 6-phosphate from D-ribose 5-phosphate and D-xylulose 5-phosphate (non-oxidative stage): step 2/3. Functionally, transaldolase is important for the balance of metabolites in the pentose-phosphate pathway. This Methanococcus maripaludis (strain DSM 14266 / JCM 13030 / NBRC 101832 / S2 / LL) protein is Probable transaldolase.